The sequence spans 506 residues: NAD(P)H-quinone oxidoreductase subunit 2 (506 aa).

The next 14 helical transmembrane spans lie at 14–34, 42–62, 79–99, 108–128, 132–152, 167–187, 206–226, 240–260, 276–296, 302–322, 330–350, 374–394, 409–429, and 462–482; these read AIIPEAFILLGIVGTLLVDLA, WAPVICYISLGSSLISLALQW, LAIAFRSIIALSTLISLLISW, PIGEFAAIVLSATLGAMLLCG, LVSVFISLETLSVASYCLSGY, LLVGSAAAAVYLYGSSFLYGL, FITSLSLVFVLSTVAFKIAAV, PTPVVAFLSVGSKTAGFAFAI, LLFTILAILSMALGNIVALAQ, MLAYSSIGQAGFVMIGIVSGT, VLYLAAYLFMNLGAFSCVILF, LGLSLCLLSLGGLPPMLGFFG, LLVVVGLITSVISIYYYISVI, and IALYTCIAVTALGGILSNPLF.

It belongs to the complex I subunit 2 family. As to quaternary structure, NDH-1 can be composed of about 15 different subunits; different subcomplexes with different compositions have been identified which probably have different functions.

It localises to the cellular thylakoid membrane. The catalysed reaction is a plastoquinone + NADH + (n+1) H(+)(in) = a plastoquinol + NAD(+) + n H(+)(out). It carries out the reaction a plastoquinone + NADPH + (n+1) H(+)(in) = a plastoquinol + NADP(+) + n H(+)(out). NDH-1 shuttles electrons from an unknown electron donor, via FMN and iron-sulfur (Fe-S) centers, to quinones in the respiratory and/or the photosynthetic chain. The immediate electron acceptor for the enzyme in this species is believed to be plastoquinone. Couples the redox reaction to proton translocation, and thus conserves the redox energy in a proton gradient. Cyanobacterial NDH-1 also plays a role in inorganic carbon-concentration. This chain is NAD(P)H-quinone oxidoreductase subunit 2, found in Prochlorococcus marinus subsp. pastoris (strain CCMP1986 / NIES-2087 / MED4).